Reading from the N-terminus, the 74-residue chain is U3-agatoxin-Ao1h (74 aa).

A signal peptide spans 1 to 20 (MRAIISLLLISTMVFGVIEA). The propeptide occupies 21–34 (VSVQKSLKIFEGER). 4 disulfide bridges follow: Cys37/Cys53, Cys44/Cys58, Cys52/Cys68, and Cys60/Cys66. Asn72 carries the post-translational modification Asparagine amide.

This sequence belongs to the neurotoxin 07 (Beta/delta-agtx) family. 03 (aga-4) subfamily. Aga sub-subfamily. Expressed by the venom gland.

The protein localises to the secreted. Its function is as follows. Insecticidal neurotoxin that induces an irreversible spastic paralysis when injected into insects. Modifies presynaptic voltage-gated sodium channels (Nav), causing them to open at the normal resting potential of the nerve. This leads to spontaneous release of neurotransmitter and repetitive action potentials in motor neurons. The sequence is that of U3-agatoxin-Ao1h from Agelena orientalis (Funnel-web spider).